A 192-amino-acid polypeptide reads, in one-letter code: Inosine triphosphate pyrophosphatase (192 aa).

11 to 16 (TGNKNK) lines the ITP pocket. E41 is a binding site for Mg(2+). Residues K53, 69 to 70 (DT), K86, 146 to 149 (FGWD), K169, and 174 to 175 (HR) contribute to the ITP site.

Belongs to the HAM1 NTPase family. As to quaternary structure, homodimer. Requires Mg(2+) as cofactor. It depends on Mn(2+) as a cofactor.

The protein resides in the cytoplasm. The enzyme catalyses ITP + H2O = IMP + diphosphate + H(+). It catalyses the reaction dITP + H2O = dIMP + diphosphate + H(+). It carries out the reaction XTP + H2O = XMP + diphosphate + H(+). In terms of biological role, pyrophosphatase that hydrolyzes non-canonical purine nucleotides such as inosine triphosphate (ITP), deoxyinosine triphosphate (dITP) or xanthosine 5'-triphosphate (XTP) to their respective monophosphate derivatives. The enzyme does not distinguish between the deoxy- and ribose forms. Probably excludes non-canonical purines from RNA and DNA precursor pools, thus preventing their incorporation into RNA and DNA and avoiding chromosomal lesions. The polypeptide is Inosine triphosphate pyrophosphatase (Ciona intestinalis (Transparent sea squirt)).